A 240-amino-acid chain; its full sequence is Mitochondrial transcription rescue factor 1 (240 aa).

Residues 1-84 (MAMASVKLLA…ECIFPFSVRL (84 aa)) constitute a mitochondrion transit peptide. The segment at 95-127 (KKSLQKVDEEDSDEESHHDEMSEQEEELEDDPT) is disordered. 2 positions are modified to phosphoserine: Ser106 and Ser116. Positions 116-126 (SEQEEELEDDP) are enriched in acidic residues. In terms of domain architecture, S4 RNA-binding spans 142 to 217 (FRYDVVLKTG…LKKVFEEKTE (76 aa)).

Monomer. Interacts with POLRMT. Interacts (via S4 domain) with MTRFR (via C-terminus). Associates with mitoribosomal S39 large subunit, peptidyl tRNA and nascent chain.

Its subcellular location is the mitochondrion matrix. In terms of biological role, mitochondrial RNA-binding protein involved in mitochondrial transcription regulation. Functions as a protective factor to maintain proper mitochondrial RNA level during stress. Acts at the transcription level and its protective function depends on its RNA binding ability. Part of a mitoribosome-associated quality control pathway that prevents aberrant translation by responding to interruptions during elongation. As heterodimer with MTRF, ejects the unfinished nascent chain and peptidyl transfer RNA (tRNA), respectively, from stalled ribosomes. Recruitment of mitoribosome biogenesis factors to these quality control intermediates suggests additional roles for MTRES1 and MTRF during mitoribosome rescue. The protein is Mitochondrial transcription rescue factor 1 of Homo sapiens (Human).